Reading from the N-terminus, the 120-residue chain is Chaperonin GroEL (120 aa).

23–27 (DGTTT) provides a ligand contact to ATP.

Belongs to the chaperonin (HSP60) family. As to quaternary structure, forms a cylinder of 14 subunits composed of two heptameric rings stacked back-to-back. Interacts with the co-chaperonin GroES.

Its subcellular location is the cytoplasm. It carries out the reaction ATP + H2O + a folded polypeptide = ADP + phosphate + an unfolded polypeptide.. Together with its co-chaperonin GroES, plays an essential role in assisting protein folding. The GroEL-GroES system forms a nano-cage that allows encapsulation of the non-native substrate proteins and provides a physical environment optimized to promote and accelerate protein folding. This Mycolicibacterium chitae (Mycobacterium chitae) protein is Chaperonin GroEL.